The chain runs to 390 residues: tRNA (guanine(9)-N1)-methyltransferase (390 aa).

A disordered region spans residues 1–72 (MDIDEESYLN…RTAQLAEGYA (72 aa)). The segment covering 43–59 (ARLEEIKPLKRAAERER) has biased composition (basic and acidic residues). An SAM-dependent MTase TRM10-type domain is found at 92 to 340 (KERKEAQRRI…AVIPIRKYAP (249 aa)). Residues 246–247 (LS), Gly-266, 270–274 (DRNRH), Cys-278, Leu-292, and 305–307 (KVL) each bind S-adenosyl-L-methionine. Asp-270 (proton acceptor) is an active-site residue. The disordered stretch occupies residues 343 to 390 (KTKRAKTETKRNEKEEEEVECTSAEGEEDIGVIEESAEVDPEDVFSNQ). Over residues 347-356 (AKTETKRNEK) the composition is skewed to basic and acidic residues. Over residues 357–390 (EEEEVECTSAEGEEDIGVIEESAEVDPEDVFSNQ) the composition is skewed to acidic residues.

The protein belongs to the class IV-like SAM-binding methyltransferase superfamily. TRM10 family. Monomer.

Its subcellular location is the cytoplasm. The protein localises to the nucleus. The catalysed reaction is guanosine(9) in tRNA + S-adenosyl-L-methionine = N(1)-methylguanosine(9) in tRNA + S-adenosyl-L-homocysteine + H(+). Its function is as follows. S-adenosyl-L-methionine-dependent guanine N(1)-methyltransferase that catalyzes the formation of N(1)-methylguanine at position 9 (m1G9) in cytoplasmic tRNA. This chain is tRNA (guanine(9)-N1)-methyltransferase, found in Cryptococcus neoformans var. neoformans serotype D (strain JEC21 / ATCC MYA-565) (Filobasidiella neoformans).